The chain runs to 127 residues: Large-conductance mechanosensitive channel (127 aa).

The next 3 membrane-spanning stretches (helical) occupy residues 9–29 (EFAMRGNVMDLAVAVVMGVAF), 32–52 (IVTALVDGIIMPCVGLLLGGV), and 75–95 (VIDFIIVAFAIFILIKLINLL).

This sequence belongs to the MscL family. In terms of assembly, homopentamer.

The protein localises to the cell inner membrane. Functionally, channel that opens in response to stretch forces in the membrane lipid bilayer. May participate in the regulation of osmotic pressure changes within the cell. The chain is Large-conductance mechanosensitive channel from Legionella pneumophila (strain Lens).